A 415-amino-acid chain; its full sequence is uncharacterized protein (415 aa).

Helical transmembrane passes span 20-40, 43-63, 78-98, 109-129, 155-175, 243-263, 300-320, 328-348, 360-380, and 388-408; these read MAYL…FGIL, LMPI…PAIA, IPIL…TPYI, LPNI…VIAF, VILV…LSIS, IVIM…SSLI, IFSS…LIAF, GILC…YTLI, ISFY…LILV, and GSLA…FAIL.

The protein belongs to the polysaccharide synthase family.

The protein resides in the cell membrane. This is an uncharacterized protein from Methanocaldococcus jannaschii (strain ATCC 43067 / DSM 2661 / JAL-1 / JCM 10045 / NBRC 100440) (Methanococcus jannaschii).